A 498-amino-acid polypeptide reads, in one-letter code: Probable cytosol aminopeptidase (498 aa).

Mn(2+)-binding residues include K271 and D276. K283 is a catalytic residue. Residues D294, D353, and E355 each contribute to the Mn(2+) site. The active site involves R357.

This sequence belongs to the peptidase M17 family. Requires Mn(2+) as cofactor.

It localises to the cytoplasm. It carries out the reaction Release of an N-terminal amino acid, Xaa-|-Yaa-, in which Xaa is preferably Leu, but may be other amino acids including Pro although not Arg or Lys, and Yaa may be Pro. Amino acid amides and methyl esters are also readily hydrolyzed, but rates on arylamides are exceedingly low.. It catalyses the reaction Release of an N-terminal amino acid, preferentially leucine, but not glutamic or aspartic acids.. Its function is as follows. Presumably involved in the processing and regular turnover of intracellular proteins. Catalyzes the removal of unsubstituted N-terminal amino acids from various peptides. In Bordetella petrii (strain ATCC BAA-461 / DSM 12804 / CCUG 43448), this protein is Probable cytosol aminopeptidase.